Reading from the N-terminus, the 532-residue chain is Spore germination protein 270-11 (532 aa).

Disordered regions lie at residues 113–225 (TTTS…GYGS) and 328–436 (LSPT…TTGT). Positions 329–426 (SPTCSDSSSP…GSGSSSETQP (98 aa)) are enriched in low complexity. 13 tandem repeats follow at residues 339-342 (TPTP), 343-346 (TETP), 347-350 (TETP), 351-354 (TETP), 355-358 (TETP), 359-362 (TETP), 363-366 (TETP), 367-370 (TETP), 371-374 (TETE), 375-378 (TPTP), 397-400 (TPTP), 401-404 (TETD), and 405-408 (TPTP). Residues 339–378 (TPTPTETPTETPTETPTETPTETPTETPTETPTETETPTP) are 10 X 4 AA tandem repeats of T-[EP]-T-[EP]. The interval 397–408 (TPTPTETDTPTP) is 3 X 4 AA tandem repeats of T-[EP]-T-[PD].

This chain is Spore germination protein 270-11 (celB), found in Dictyostelium discoideum (Social amoeba).